A 312-amino-acid polypeptide reads, in one-letter code: Phosphoribosylaminoimidazole-succinocarboxamide synthase (312 aa).

Belongs to the SAICAR synthetase family.

It carries out the reaction 5-amino-1-(5-phospho-D-ribosyl)imidazole-4-carboxylate + L-aspartate + ATP = (2S)-2-[5-amino-1-(5-phospho-beta-D-ribosyl)imidazole-4-carboxamido]succinate + ADP + phosphate + 2 H(+). It functions in the pathway purine metabolism; IMP biosynthesis via de novo pathway; 5-amino-1-(5-phospho-D-ribosyl)imidazole-4-carboxamide from 5-amino-1-(5-phospho-D-ribosyl)imidazole-4-carboxylate: step 1/2. This is Phosphoribosylaminoimidazole-succinocarboxamide synthase from Legionella pneumophila (strain Lens).